A 497-amino-acid polypeptide reads, in one-letter code: COP9 signalosome complex subunit 6 (497 aa).

Residues 21 to 162 (VALHPLPILE…LTIYESNLEI (142 aa)) enclose the MPN domain. Disordered stretches follow at residues 230–282 (ATED…KNRD), 324–350 (YLSSGDASSQQQQQQQQQQQTEGLDQP), and 435–497 (AKNS…RFDH). Positions 236–246 (SDKPLMKKVVD) are enriched in basic and acidic residues. Low complexity-rich tracts occupy residues 258 to 272 (SDDAAAEAPTTSSAA) and 333 to 343 (QQQQQQQQQQQ). Residues 440–453 (RREQASHGGGERFN) are compositionally biased toward basic and acidic residues. Gly residues predominate over residues 475-488 (VGEGSASGSGGSGP).

It belongs to the peptidase M67A family. CSN6 subfamily. In terms of assembly, component of the COP9 signalosome (CSN) complex.

It is found in the cytoplasm. The protein resides in the nucleus. Component of the COP9 signalosome (CSN) complex that acts as an regulator of the ubiquitin (Ubl) conjugation pathway by mediating the deneddylation of the cullin subunit of SCF-type E3 ubiquitin-protein ligase complexes. The CSN complex is involved in the regulation of the circadian clock through its control of the stability of the SCF(FWD1) complex. This Neurospora crassa (strain ATCC 24698 / 74-OR23-1A / CBS 708.71 / DSM 1257 / FGSC 987) protein is COP9 signalosome complex subunit 6 (csn-6).